Consider the following 635-residue polypeptide: Biosynthetic arginine decarboxylase (635 aa).

An N6-(pyridoxal phosphate)lysine modification is found at Lys-100. Val-282–Tyr-292 provides a ligand contact to substrate.

The protein belongs to the Orn/Lys/Arg decarboxylase class-II family. SpeA subfamily. Mg(2+) serves as cofactor. The cofactor is pyridoxal 5'-phosphate.

It catalyses the reaction L-arginine + H(+) = agmatine + CO2. The protein operates within amine and polyamine biosynthesis; agmatine biosynthesis; agmatine from L-arginine: step 1/1. Its function is as follows. Catalyzes the biosynthesis of agmatine from arginine. This chain is Biosynthetic arginine decarboxylase, found in Geobacter sulfurreducens (strain ATCC 51573 / DSM 12127 / PCA).